Consider the following 454-residue polypeptide: Bifunctional protein GlmU (454 aa).

Positions 1–229 (MQRYAVVLAA…FDEIMGVNDR (229 aa)) are pyrophosphorylase. UDP-N-acetyl-alpha-D-glucosamine contacts are provided by residues 8–11 (LAAG), Lys22, Gln72, and 77–78 (GT). Asp102 serves as a coordination point for Mg(2+). Gly139, Glu154, and Asn227 together coordinate UDP-N-acetyl-alpha-D-glucosamine. Asn227 contributes to the Mg(2+) binding site. Residues 230–250 (VALSKAEQAMRQRINEYHMRN) form a linker region. Residues 251-454 (GVTLIDPSST…KPGYLNKNKE (204 aa)) are N-acetyltransferase. Residues Arg332 and Lys350 each contribute to the UDP-N-acetyl-alpha-D-glucosamine site. His362 (proton acceptor) is an active-site residue. UDP-N-acetyl-alpha-D-glucosamine is bound by residues Tyr365 and Asn376. Acetyl-CoA contacts are provided by residues 385–386 (NY), Ala422, and Arg439.

In the N-terminal section; belongs to the N-acetylglucosamine-1-phosphate uridyltransferase family. This sequence in the C-terminal section; belongs to the transferase hexapeptide repeat family. As to quaternary structure, homotrimer. Mg(2+) is required as a cofactor.

It is found in the cytoplasm. It catalyses the reaction alpha-D-glucosamine 1-phosphate + acetyl-CoA = N-acetyl-alpha-D-glucosamine 1-phosphate + CoA + H(+). The catalysed reaction is N-acetyl-alpha-D-glucosamine 1-phosphate + UTP + H(+) = UDP-N-acetyl-alpha-D-glucosamine + diphosphate. The protein operates within nucleotide-sugar biosynthesis; UDP-N-acetyl-alpha-D-glucosamine biosynthesis; N-acetyl-alpha-D-glucosamine 1-phosphate from alpha-D-glucosamine 6-phosphate (route II): step 2/2. Its pathway is nucleotide-sugar biosynthesis; UDP-N-acetyl-alpha-D-glucosamine biosynthesis; UDP-N-acetyl-alpha-D-glucosamine from N-acetyl-alpha-D-glucosamine 1-phosphate: step 1/1. It functions in the pathway bacterial outer membrane biogenesis; LPS lipid A biosynthesis. Catalyzes the last two sequential reactions in the de novo biosynthetic pathway for UDP-N-acetylglucosamine (UDP-GlcNAc). The C-terminal domain catalyzes the transfer of acetyl group from acetyl coenzyme A to glucosamine-1-phosphate (GlcN-1-P) to produce N-acetylglucosamine-1-phosphate (GlcNAc-1-P), which is converted into UDP-GlcNAc by the transfer of uridine 5-monophosphate (from uridine 5-triphosphate), a reaction catalyzed by the N-terminal domain. This chain is Bifunctional protein GlmU, found in Staphylococcus carnosus (strain TM300).